Here is a 410-residue protein sequence, read N- to C-terminus: Killer cell immunoglobulin-like receptor 3DL3 (410 aa).

The N-terminal stretch at 1–25 (MSLMVVSMACVGFFLLEGPWPHVGG) is a signal peptide. The Extracellular portion of the chain corresponds to 26–322 (QDKPFLSAWP…VSVTGNSRHL (297 aa)). 3 consecutive Ig-like C2-type domains span residues 42–97 (GQHV…RCCS), 137–197 (GETV…RCFG), and 237–295 (GENV…RCFG). Disulfide bonds link Cys49-Cys95 and Cys144-Cys195. N-linked (GlcNAc...) asparagine glycosylation is found at Asn179, Asn239, and Asn273. Cys244 and Cys293 are disulfide-bonded. The helical transmembrane segment at 323–343 (HVLIGTSVVIIPFAILLFFLL) threads the bilayer. The Cytoplasmic segment spans residues 344-410 (HRWCANKKNA…PKTPPTDTSV (67 aa)).

It belongs to the immunoglobulin superfamily.

The protein resides in the cell membrane. Receptor on natural killer cells. May inhibit the activity of NK cells thus preventing cell lysis. In Homo sapiens (Human), this protein is Killer cell immunoglobulin-like receptor 3DL3 (KIR3DL3).